A 433-amino-acid polypeptide reads, in one-letter code: Ornithine decarboxylase, chloroplastic (433 aa).

Position 96 is an N6-(pyridoxal phosphate)lysine (K96). Pyridoxal 5'-phosphate contacts are provided by residues S228, G266, and 299-302; that span reads EPGR. 342–343 is a binding site for substrate; sequence YD. The active-site Proton donor; shared with dimeric partner is the C378. D379 contributes to the substrate binding site. Pyridoxal 5'-phosphate is bound at residue Y407.

Belongs to the Orn/Lys/Arg decarboxylase class-II family. In terms of assembly, homodimer. Only the dimer is catalytically active, as the active sites are constructed of residues from both monomers. The cofactor is pyridoxal 5'-phosphate.

Its subcellular location is the plastid. It is found in the chloroplast. The enzyme catalyses L-ornithine + H(+) = putrescine + CO2. It functions in the pathway alkaloid biosynthesis; nicotine biosynthesis. It participates in amine and polyamine biosynthesis; putrescine biosynthesis via L-ornithine pathway; putrescine from L-ornithine: step 1/1. Involved in the biosynthesis of pyridine alkaloid natural products, leading mainly to the production of anabasine, anatabine, nicotine and nornicotine, effective deterrents against herbivores with antiparasitic and pesticide properties (neurotoxins); nornicotine serves as the precursor in the synthesis of the carcinogen compound N'-nitrosonornicotine (NNN). Catalyzes the first and rate-limiting step of polyamine biosynthesis that converts ornithine into putrescine, which is the precursor for the polyamines, spermidine and spermine. Polyamines are essential for cell proliferation and are implicated in cellular processes, ranging from DNA replication to apoptosis. The protein is Ornithine decarboxylase, chloroplastic of Nicotiana glauca (Glaucous tobacco).